The following is a 313-amino-acid chain: Ribosomal RNA small subunit methyltransferase H (313 aa).

S-adenosyl-L-methionine contacts are provided by residues 34–36 (GGH), D53, F80, D101, and Q108.

The protein belongs to the methyltransferase superfamily. RsmH family.

Its subcellular location is the cytoplasm. It catalyses the reaction cytidine(1402) in 16S rRNA + S-adenosyl-L-methionine = N(4)-methylcytidine(1402) in 16S rRNA + S-adenosyl-L-homocysteine + H(+). Its function is as follows. Specifically methylates the N4 position of cytidine in position 1402 (C1402) of 16S rRNA. This chain is Ribosomal RNA small subunit methyltransferase H, found in Lacticaseibacillus paracasei (strain ATCC 334 / BCRC 17002 / CCUG 31169 / CIP 107868 / KCTC 3260 / NRRL B-441) (Lactobacillus paracasei).